A 348-amino-acid polypeptide reads, in one-letter code: Holliday junction branch migration complex subunit RuvB (348 aa).

The large ATPase domain (RuvB-L) stretch occupies residues A4–Y184. Residues I23, R24, G65, K68, T69, T70, E131–F133, R174, Y184, and R221 contribute to the ATP site. Position 69 (T69) interacts with Mg(2+). Residues S185–D255 are small ATPAse domain (RuvB-S). Positions E258–E348 are head domain (RuvB-H). 3 residues coordinate DNA: R294, R313, and R318.

This sequence belongs to the RuvB family. As to quaternary structure, homohexamer. Forms an RuvA(8)-RuvB(12)-Holliday junction (HJ) complex. HJ DNA is sandwiched between 2 RuvA tetramers; dsDNA enters through RuvA and exits via RuvB. An RuvB hexamer assembles on each DNA strand where it exits the tetramer. Each RuvB hexamer is contacted by two RuvA subunits (via domain III) on 2 adjacent RuvB subunits; this complex drives branch migration. In the full resolvosome a probable DNA-RuvA(4)-RuvB(12)-RuvC(2) complex forms which resolves the HJ.

The protein localises to the cytoplasm. It catalyses the reaction ATP + H2O = ADP + phosphate + H(+). The RuvA-RuvB-RuvC complex processes Holliday junction (HJ) DNA during genetic recombination and DNA repair, while the RuvA-RuvB complex plays an important role in the rescue of blocked DNA replication forks via replication fork reversal (RFR). RuvA specifically binds to HJ cruciform DNA, conferring on it an open structure. The RuvB hexamer acts as an ATP-dependent pump, pulling dsDNA into and through the RuvAB complex. RuvB forms 2 homohexamers on either side of HJ DNA bound by 1 or 2 RuvA tetramers; 4 subunits per hexamer contact DNA at a time. Coordinated motions by a converter formed by DNA-disengaged RuvB subunits stimulates ATP hydrolysis and nucleotide exchange. Immobilization of the converter enables RuvB to convert the ATP-contained energy into a lever motion, pulling 2 nucleotides of DNA out of the RuvA tetramer per ATP hydrolyzed, thus driving DNA branch migration. The RuvB motors rotate together with the DNA substrate, which together with the progressing nucleotide cycle form the mechanistic basis for DNA recombination by continuous HJ branch migration. Branch migration allows RuvC to scan DNA until it finds its consensus sequence, where it cleaves and resolves cruciform DNA. In Pseudomonas putida (strain W619), this protein is Holliday junction branch migration complex subunit RuvB.